Consider the following 140-residue polypeptide: NADPH-dependent 7-cyano-7-deazaguanine reductase (140 aa).

Catalysis depends on C49, which acts as the Thioimide intermediate. Catalysis depends on D56, which acts as the Proton donor. Residues 71 to 73 (IEL) and 90 to 91 (HE) each bind substrate.

The protein belongs to the GTP cyclohydrolase I family. QueF type 1 subfamily.

The protein resides in the cytoplasm. It carries out the reaction 7-aminomethyl-7-carbaguanine + 2 NADP(+) = 7-cyano-7-deazaguanine + 2 NADPH + 3 H(+). It participates in tRNA modification; tRNA-queuosine biosynthesis. Functionally, catalyzes the NADPH-dependent reduction of 7-cyano-7-deazaguanine (preQ0) to 7-aminomethyl-7-deazaguanine (preQ1). The sequence is that of NADPH-dependent 7-cyano-7-deazaguanine reductase from Prochlorococcus marinus (strain NATL2A).